Here is a 437-residue protein sequence, read N- to C-terminus: Selenocysteine lyase (437 aa).

Position 1 is an N-acetylmethionine (methionine 1). Residues 1-30 (MEAAGARNRDARSRAEKSPPESRKVYMDYN) form a disordered region. Positions 7–26 (RNRDARSRAEKSPPESRKVY) are enriched in basic and acidic residues. Position 252 is an N6-(pyridoxal phosphate)lysine (lysine 252). Cysteine 380 functions as the S-selanylcysteine intermediate in the catalytic mechanism.

Belongs to the class-V pyridoxal-phosphate-dependent aminotransferase family. Homodimer. It depends on pyridoxal 5'-phosphate as a cofactor.

The protein resides in the cytoplasm. Its subcellular location is the cytosol. It carries out the reaction L-selenocysteine + AH2 = hydrogenselenide + L-alanine + A + H(+). In terms of biological role, catalyzes the decomposition of L-selenocysteine to L-alanine and elemental selenium. In Bos taurus (Bovine), this protein is Selenocysteine lyase (SCLY).